We begin with the raw amino-acid sequence, 163 residues long: Phosphopantetheine adenylyltransferase (163 aa).

Residue serine 8 coordinates substrate. ATP is bound by residues 8-9 and histidine 16; that span reads SF. Residues lysine 40, threonine 72, and arginine 86 each coordinate substrate. ATP contacts are provided by residues 87–89, glutamate 97, and 122–128; these read GLR and HSFLSSS.

It belongs to the bacterial CoaD family. As to quaternary structure, homohexamer. Requires Mg(2+) as cofactor.

Its subcellular location is the cytoplasm. The catalysed reaction is (R)-4'-phosphopantetheine + ATP + H(+) = 3'-dephospho-CoA + diphosphate. Its pathway is cofactor biosynthesis; coenzyme A biosynthesis; CoA from (R)-pantothenate: step 4/5. In terms of biological role, reversibly transfers an adenylyl group from ATP to 4'-phosphopantetheine, yielding dephospho-CoA (dPCoA) and pyrophosphate. The protein is Phosphopantetheine adenylyltransferase of Parasynechococcus marenigrum (strain WH8102).